The sequence spans 517 residues: Probable bifunctional methylthioribulose-1-phosphate dehydratase/enolase-phosphatase E1 (517 aa).

A methylthioribulose-1-phosphate dehydratase region spans residues 1–242 (MACGGCSCEA…CIKLYQLGID (242 aa)). A substrate-binding site is contributed by cysteine 114. Zn(2+) is bound by residues histidine 132 and histidine 134. The active-site Proton donor/acceptor; for methylthioribulose-1-phosphate dehydratase activity is the glutamate 157. A Zn(2+)-binding site is contributed by histidine 207. An enolase-phosphatase E1 region spans residues 278-517 (VVLDIEGTTT…FRTIKSFSEI (240 aa)). Mg(2+) contacts are provided by aspartate 281 and glutamate 283. Substrate is bound by residues 416-417 (SS) and lysine 450. Aspartate 476 provides a ligand contact to Mg(2+).

In the N-terminal section; belongs to the aldolase class II family. MtnB subfamily. The protein in the C-terminal section; belongs to the HAD-like hydrolase superfamily. MasA/MtnC family. Requires Zn(2+) as cofactor. It depends on Mg(2+) as a cofactor.

It catalyses the reaction 5-(methylsulfanyl)-D-ribulose 1-phosphate = 5-methylsulfanyl-2,3-dioxopentyl phosphate + H2O. The enzyme catalyses 5-methylsulfanyl-2,3-dioxopentyl phosphate + H2O = 1,2-dihydroxy-5-(methylsulfanyl)pent-1-en-3-one + phosphate. Its pathway is amino-acid biosynthesis; L-methionine biosynthesis via salvage pathway; L-methionine from S-methyl-5-thio-alpha-D-ribose 1-phosphate: step 2/6. It functions in the pathway amino-acid biosynthesis; L-methionine biosynthesis via salvage pathway; L-methionine from S-methyl-5-thio-alpha-D-ribose 1-phosphate: step 3/6. It participates in amino-acid biosynthesis; L-methionine biosynthesis via salvage pathway; L-methionine from S-methyl-5-thio-alpha-D-ribose 1-phosphate: step 4/6. The polypeptide is Probable bifunctional methylthioribulose-1-phosphate dehydratase/enolase-phosphatase E1 (Sorghum bicolor (Sorghum)).